The following is a 314-amino-acid chain: MSIDSSTSANIETLPVYSDSSNEYIQVIYQNPNIYEHEENNFKSVFTKSEIKSGQLILLEHVLVNDSTNSYLIIENNEYLFDMSHPRTDKFSECSEENRRLQAIKKLSSNCFGIDGNKLLTCAIQKINHSCTPNCAVNISEKYNFGGTHIVFMELFSINNIPANTEITISYGPVTGHKRDFECLCGKSLEEREKIFSIVCGLSRKISQLNNDLIKKYIYVYTTSDLGKKIMLNHFLATKGIYINKDKIVAITESGAETINNLVYKYMKIKESDQTNKKITSHKIKMFMTIIHACLFPEDSTDSSESVVLMREKN.

In terms of domain architecture, SET spans 23 to 172 (EYIQVIYQNP…ANTEITISYG (150 aa)).

It belongs to the class V-like SAM-binding methyltransferase superfamily.

This Acanthamoeba polyphaga mimivirus (APMV) protein is Putative SET domain-containing protein L222.